A 125-amino-acid polypeptide reads, in one-letter code: MSGRGKGGKVKAKAKSRSSRAGLQFPVGRIHRLLRKGNYGERVGAGAPVYLAAVMEYLAAEVLELAGNAARDNKKTRIIPRHLQLAIRNDEELNKLLSGVTIAQGGVLPNIQAVLLPKKTESKKA.

Basic residues predominate over residues 1-18 (MSGRGKGGKVKAKAKSRS). A disordered region spans residues 1 to 21 (MSGRGKGGKVKAKAKSRSSRA). Ser2 carries the N-acetylserine modification. Ser2 carries the post-translational modification Phosphoserine. A Glycyl lysine isopeptide (Lys-Gly) (interchain with G-Cter in ubiquitin) cross-link involves residue Lys119.

It belongs to the histone H2A family. In terms of assembly, the nucleosome is a histone octamer containing two molecules each of H2A, H2B, H3 and H4 assembled in one H3-H4 heterotetramer and two H2A-H2B heterodimers. The octamer wraps approximately 147 bp of DNA. In terms of processing, monoubiquitination of Lys-119 gives a specific tag for epigenetic transcriptional repression. Post-translationally, phosphorylation on Ser-2 is enhanced during mitosis. Phosphorylation on Ser-2 directly represses transcription.

It is found in the nucleus. The protein localises to the chromosome. In terms of biological role, core component of nucleosome. Nucleosomes wrap and compact DNA into chromatin, limiting DNA accessibility to the cellular machineries which require DNA as a template. Histones thereby play a central role in transcription regulation, DNA repair, DNA replication and chromosomal stability. DNA accessibility is regulated via a complex set of post-translational modifications of histones, also called histone code, and nucleosome remodeling. The chain is Histone H2A from Chironomus thummi thummi (Midge).